The primary structure comprises 257 residues: Putative cysteine-rich repeat secretory protein 28 (257 aa).

The first 26 residues, 1 to 26, serve as a signal peptide directing secretion; that stretch reads MFSTFGSVPILTVVAIQLFLIRNVLS. Gnk2-homologous domains follow at residues 32-136 and 142-254; these read AYLH…TVDS and YEND…LYPF.

It belongs to the cysteine-rich repeat secretory protein family.

The protein localises to the secreted. The chain is Putative cysteine-rich repeat secretory protein 28 (CRRSP28) from Arabidopsis thaliana (Mouse-ear cress).